A 99-amino-acid chain; its full sequence is Putative membrane protein insertion efficiency factor (99 aa).

The protein belongs to the UPF0161 family.

The protein resides in the cell membrane. In terms of biological role, could be involved in insertion of integral membrane proteins into the membrane. The chain is Putative membrane protein insertion efficiency factor from Levilactobacillus brevis (strain ATCC 367 / BCRC 12310 / CIP 105137 / JCM 1170 / LMG 11437 / NCIMB 947 / NCTC 947) (Lactobacillus brevis).